A 441-amino-acid polypeptide reads, in one-letter code: Ribosomal protein uS12 methylthiotransferase RimO (441 aa).

Residues 8–118 (PKIGFVSLGC…VLEHVHHYSP (111 aa)) enclose the MTTase N-terminal domain. 6 residues coordinate [4Fe-4S] cluster: C17, C53, C82, C150, C154, and C157. Positions 136–373 (LTPRHYAYLK…MQLQQQISAE (238 aa)) constitute a Radical SAM core domain. The 66-residue stretch at 376–441 (QEKVGREILV…DEYDLWGTRV (66 aa)) folds into the TRAM domain.

Belongs to the methylthiotransferase family. RimO subfamily. Requires [4Fe-4S] cluster as cofactor.

The protein resides in the cytoplasm. The catalysed reaction is L-aspartate(89)-[ribosomal protein uS12]-hydrogen + (sulfur carrier)-SH + AH2 + 2 S-adenosyl-L-methionine = 3-methylsulfanyl-L-aspartate(89)-[ribosomal protein uS12]-hydrogen + (sulfur carrier)-H + 5'-deoxyadenosine + L-methionine + A + S-adenosyl-L-homocysteine + 2 H(+). Its function is as follows. Catalyzes the methylthiolation of an aspartic acid residue of ribosomal protein uS12. The protein is Ribosomal protein uS12 methylthiotransferase RimO of Klebsiella pneumoniae (strain 342).